The following is a 119-amino-acid chain: Large ribosomal subunit protein bL20 (119 aa).

This sequence belongs to the bacterial ribosomal protein bL20 family.

In terms of biological role, binds directly to 23S ribosomal RNA and is necessary for the in vitro assembly process of the 50S ribosomal subunit. It is not involved in the protein synthesizing functions of that subunit. The protein is Large ribosomal subunit protein bL20 of Bordetella petrii (strain ATCC BAA-461 / DSM 12804 / CCUG 43448).